Reading from the N-terminus, the 152-residue chain is Syntaxin-8A (152 aa).

Residues 1-14 (MNNNNNFNSNFNSN) are compositionally biased toward low complexity. A disordered region spans residues 1–22 (MNNNNNFNSNFNSNRISSTQPY). The Cytoplasmic segment spans residues 1 to 131 (MNNNNNFNSN…LTQQSKTTGY (131 aa)). The 63-residue stretch at 60–122 (KRDMEEQDKM…RNTTKNLITL (63 aa)) folds into the t-SNARE coiled-coil homology domain. Residues 132–152 (CSAICFLLLVLLVIIILASVL) traverse the membrane as a helical; Anchor for type IV membrane protein segment.

This sequence belongs to the syntaxin family. Component of the SNARE complex composed of syn7A, syn8A, vamp7A and vti1A.

It is found in the endosome membrane. Its function is as follows. Involved in the targeting and/or fusion of transport vesicles to their target membrane during transport of proteins from the early endosome to the lysosome. Required for fusion of late endosomes with lysosomes and homotypic lysosomal fusion. This chain is Syntaxin-8A, found in Dictyostelium discoideum (Social amoeba).